We begin with the raw amino-acid sequence, 309 residues long: Protein-L-isoaspartate O-methyltransferase 2 (309 aa).

Residues 23–28 (KKRKKK) carry the Nuclear localization signal motif. The active site involves S144.

Belongs to the methyltransferase superfamily. L-isoaspartyl/D-aspartyl protein methyltransferase family. In terms of tissue distribution, expressed in rosette leaves, stems, cauline leaves, flowers and developing seeds.

Its subcellular location is the nucleus. The catalysed reaction is [protein]-L-isoaspartate + S-adenosyl-L-methionine = [protein]-L-isoaspartate alpha-methyl ester + S-adenosyl-L-homocysteine. Functionally, catalyzes the methyl esterification of L-isoaspartyl residues in peptides and proteins that result from spontaneous decomposition of normal L-aspartyl and L-asparaginyl residues. It plays a role in the repair and/or degradation of damaged proteins. The polypeptide is Protein-L-isoaspartate O-methyltransferase 2 (PIMT2) (Arabidopsis thaliana (Mouse-ear cress)).